A 198-amino-acid chain; its full sequence is Prostamide/prostaglandin F synthase (198 aa).

Tyrosine 108 is modified (phosphotyrosine).

It belongs to the peroxiredoxin-like PRXL2 family. Prostamide/prostaglandin F synthase subfamily.

It localises to the cytoplasm. The protein resides in the cytosol. The catalysed reaction is prostaglandin H2 + [thioredoxin]-dithiol = prostaglandin F2alpha + [thioredoxin]-disulfide. It catalyses the reaction prostamide F2alpha + [thioredoxin]-disulfide = prostamide H2 + [thioredoxin]-dithiol. Catalyzes the reduction of prostaglandin-ethanolamide H(2) (prostamide H(2)) to prostamide F(2alpha) with NADPH as proton donor. Also able to reduce prostaglandin H(2) to prostaglandin F(2alpha). This chain is Prostamide/prostaglandin F synthase, found in Homo sapiens (Human).